We begin with the raw amino-acid sequence, 3351 residues long: Apolipophorins (3351 aa).

Positions Met-1–Ala-25 are cleaved as a signal peptide. The 599-residue stretch at Tyr-43–Ser-641 folds into the Vitellogenin domain. Asn-67, Asn-644, Asn-1514, Asn-1744, Asn-1932, Asn-1979, and Asn-2822 each carry an N-linked (GlcNAc...) asparagine glycan. The VWFD domain maps to Leu-2786 to Ile-2952.

As to quaternary structure, interacts with Nrx-1 (via cytoplasmic domain); the interaction supports apolpp/ApoLI protein stability. Post-translationally, may be modified covalently by lipidation. Cleaved into 2 chains by furin protease. However, prevention of cleavage does not impair its function. During stage 12, it is highly present throughout the yolk sac. By late stage 14, it localizes in the lateral fat body cells. Starting at stage 14, it localizes to the apodemes. Component of hemolymph clots (at protein level). Expressed in the amniosera. Expressed in rhabdomere of photoreceptor cells in retina (at protein level). In terms of tissue distribution, expressed in rhabdomere of photoreceptor cells in retina (at protein level). As to expression, expressed in simper cells as well as interphotoreceptor matrix (at protein level).

It localises to the secreted. The protein localises to the cell projection. It is found in the rhabdomere. In terms of biological role, constitutes the major component of lipophorin, which mediates transport for various types of lipids in hemolymph. Acts by forming lipoprotein particles that bind lipoproteins and lipids. Also involved in the transport of hydrophobic ligands like juvenile hormones, pheromone hydrocarbons and carotenoids. Required for morphogens wingless (wg) and hedgehog (hh) function, probably by acting as vehicles for the movement of wg and hh, explaining how covalently lipidated wg and hh can spread over long distances. May also be involved in transport and/or metabolism of heme. Involved in yolk granule formation. May be a component of yolk incorporated into yolk granules via yl/yolkless-mediated endocytosis and the endolysosomal pathway. The polypeptide is Apolipophorins (Drosophila melanogaster (Fruit fly)).